The following is a 159-amino-acid chain: Ribosomal RNA large subunit methyltransferase H (159 aa).

Residues L76, G107, and 126–131 (LSKLTM) contribute to the S-adenosyl-L-methionine site.

It belongs to the RNA methyltransferase RlmH family. As to quaternary structure, homodimer.

Its subcellular location is the cytoplasm. The enzyme catalyses pseudouridine(1915) in 23S rRNA + S-adenosyl-L-methionine = N(3)-methylpseudouridine(1915) in 23S rRNA + S-adenosyl-L-homocysteine + H(+). Its function is as follows. Specifically methylates the pseudouridine at position 1915 (m3Psi1915) in 23S rRNA. This chain is Ribosomal RNA large subunit methyltransferase H, found in Acinetobacter baumannii (strain AB307-0294).